We begin with the raw amino-acid sequence, 502 residues long: Probable zinc metalloprotease MGG_02107 (502 aa).

Positions 1 to 21 (MRSPPGAVAALASVAAQLATA) are cleaved as a signal peptide. His-182, Asp-202, and Glu-235 together coordinate Zn(2+). The N-linked (GlcNAc...) asparagine glycan is linked to Asn-250. Asp-262 provides a ligand contact to Zn(2+). The disordered stretch occupies residues 284–307 (QGGSPAGESKERAETRASIGGEND). N-linked (GlcNAc...) asparagine glycans are attached at residues Asn-375, Asn-417, and Asn-427. Residues 414–502 (QVRNVTVDTS…KSPATMPFPG (89 aa)) form the Fibronectin type-III domain.

This sequence belongs to the peptidase M28 family. M28B subfamily. Zn(2+) is required as a cofactor.

It is found in the secreted. In Pyricularia oryzae (strain 70-15 / ATCC MYA-4617 / FGSC 8958) (Rice blast fungus), this protein is Probable zinc metalloprotease MGG_02107.